The following is a 287-amino-acid chain: ATP synthase gamma chain (287 aa).

This sequence belongs to the ATPase gamma chain family. F-type ATPases have 2 components, CF(1) - the catalytic core - and CF(0) - the membrane proton channel. CF(1) has five subunits: alpha(3), beta(3), gamma(1), delta(1), epsilon(1). CF(0) has three main subunits: a, b and c.

It is found in the cell inner membrane. Functionally, produces ATP from ADP in the presence of a proton gradient across the membrane. The gamma chain is believed to be important in regulating ATPase activity and the flow of protons through the CF(0) complex. This chain is ATP synthase gamma chain, found in Stenotrophomonas maltophilia (strain K279a).